Here is a 552-residue protein sequence, read N- to C-terminus: MSTTATVATTPEGIPVIILKEGSSRTYGKEALRINIAAVKAVEEALKSTYGPRGMDKMLVDSLGDITITNDGATILDKMDLQHPAAKLLVQIAKGQDEETADGTKTAVILAGELVKKAEELLYKEIHPTIIVSGFKKAEEQALKTIEEIAQKVSVNDMDILKKVAMTSLNSKAVAGAREYLADIVAKAVTQVAELRGDRWYVDLDNIQIVKKHGGSINDTQIIYGIVVDKEVVHPGMPKRVENAKIALLDASLEVEKPELDAEIRINDPTQMKKFLEEEENLLKEKVDKIAATGANVVICQKGIDEVAQHYLAKKGILAVRRAKKSDLEKLARATGGRVVSNIDELTPQDLGYAALVEERKVGEDKMVFVEGAKNPKAVSILIRGGLERVVDETERALRDALGTVADVIRDGRAVAGGGAVELEIAKRLRKYAPQIGGKEQLAIEAYASALENLVMILIENGGYDPIDLLVKLRSAHENEANKWYGINVFTGQVEDMWKLGVIEPAVVKMNAIKAATEAATLILRIDDLIAAGKKSESKGGESKSEEKKEED.

This sequence belongs to the TCP-1 chaperonin family. As to quaternary structure, forms a Heterooligomeric complex of two stacked nine-membered rings; one of alpha and the other of beta subunits. The N-terminus is blocked.

Its function is as follows. Molecular chaperone; binds unfolded polypeptides in vitro, and has a weak ATPase activity. The chain is Thermosome subunit beta (thsB) from Sulfurisphaera tokodaii (strain DSM 16993 / JCM 10545 / NBRC 100140 / 7) (Sulfolobus tokodaii).